We begin with the raw amino-acid sequence, 505 residues long: ATP synthase subunit alpha (505 aa).

Residue 170 to 177 (GDRQTGKT) participates in ATP binding.

This sequence belongs to the ATPase alpha/beta chains family. F-type ATPases have 2 components, CF(1) - the catalytic core - and CF(0) - the membrane proton channel. CF(1) has five subunits: alpha(3), beta(3), gamma(1), delta(1), epsilon(1). CF(0) has four main subunits: a(1), b(1), b'(1) and c(9-12).

It is found in the cellular thylakoid membrane. It catalyses the reaction ATP + H2O + 4 H(+)(in) = ADP + phosphate + 5 H(+)(out). Its function is as follows. Produces ATP from ADP in the presence of a proton gradient across the membrane. The alpha chain is a regulatory subunit. This Prochlorococcus marinus (strain MIT 9303) protein is ATP synthase subunit alpha.